The sequence spans 154 residues: Myoglobin (154 aa).

One can recognise a Globin domain in the interval 2–148 (GLSDQEWQQV…FRNDMASKYK (147 aa)). Nitrite is bound at residue His-65. His-65 lines the O2 pocket. His-94 is a binding site for heme b.

Belongs to the globin family. Monomeric.

Its subcellular location is the cytoplasm. It localises to the sarcoplasm. The catalysed reaction is Fe(III)-heme b-[protein] + nitric oxide + H2O = Fe(II)-heme b-[protein] + nitrite + 2 H(+). The enzyme catalyses H2O2 + AH2 = A + 2 H2O. In terms of biological role, monomeric heme protein which primary function is to store oxygen and facilitate its diffusion within muscle tissues. Reversibly binds oxygen through a pentacoordinated heme iron and enables its timely and efficient release as needed during periods of heightened demand. Depending on the oxidative conditions of tissues and cells, and in addition to its ability to bind oxygen, it also has a nitrite reductase activity whereby it regulates the production of bioactive nitric oxide. Under stress conditions, like hypoxia and anoxia, it also protects cells against reactive oxygen species thanks to its pseudoperoxidase activity. In Gallus gallus (Chicken), this protein is Myoglobin (MB).